The sequence spans 133 residues: Small ribosomal subunit protein uS15 (133 aa).

Belongs to the universal ribosomal protein uS15 family. Part of the 30S ribosomal subunit.

This Methanosphaera stadtmanae (strain ATCC 43021 / DSM 3091 / JCM 11832 / MCB-3) protein is Small ribosomal subunit protein uS15.